Here is a 309-residue protein sequence, read N- to C-terminus: MKQTRALMEGAILISLFAIITLLVVYVPVIGTILLFALPLPMILYTIRHGLKLGIWMGAVSLPVVFIVGSFNGLIVAFMSACAGIAMGHFFKRKEPGHAIISGALIYMLSIVFYFVISIQFLGINIIDEAMTQYRQSLDIVETVAKQSGNAGQFEKQLKLMEEQLGIVQYLFPTAIVMVGVIFSFLSYLIAKPLLRRFSPDIPNLKPFRELKFPQSVVVLYLIIVMLSFLPLEKGQMLYSIALNGEFILGFLIFIQGLSFIFFYCHKKQYPKAAAVIAVILGFVHPVFMAAIRILGVLDMGFHIRNKVK.

This is an uncharacterized protein from Bacillus subtilis (strain 168).